We begin with the raw amino-acid sequence, 931 residues long: Bifunctional glutamine synthetase adenylyltransferase/adenylyl-removing enzyme (931 aa).

Positions 1–434 are adenylyl removase; it reads MTLAPADLPV…STEFAALLAP (434 aa). The segment at 441-931 is adenylyl transferase; it reads PDALANYWRS…ACRAAELPFA (491 aa).

It belongs to the GlnE family. Mg(2+) is required as a cofactor.

The enzyme catalyses [glutamine synthetase]-O(4)-(5'-adenylyl)-L-tyrosine + phosphate = [glutamine synthetase]-L-tyrosine + ADP. It catalyses the reaction [glutamine synthetase]-L-tyrosine + ATP = [glutamine synthetase]-O(4)-(5'-adenylyl)-L-tyrosine + diphosphate. In terms of biological role, involved in the regulation of glutamine synthetase GlnA, a key enzyme in the process to assimilate ammonia. When cellular nitrogen levels are high, the C-terminal adenylyl transferase (AT) inactivates GlnA by covalent transfer of an adenylyl group from ATP to specific tyrosine residue of GlnA, thus reducing its activity. Conversely, when nitrogen levels are low, the N-terminal adenylyl removase (AR) activates GlnA by removing the adenylyl group by phosphorolysis, increasing its activity. The regulatory region of GlnE binds the signal transduction protein PII (GlnB) which indicates the nitrogen status of the cell. The polypeptide is Bifunctional glutamine synthetase adenylyltransferase/adenylyl-removing enzyme (Stenotrophomonas maltophilia (strain K279a)).